Reading from the N-terminus, the 383-residue chain is Thioredoxin reductase 2 (383 aa).

FAD is bound by residues 66-69 (SGPA), 87-88 (FE), 95-100 (IAPGGQ), N109, V142, C200, D345, and 352-354 (RQA). An intrachain disulfide couples C197 to C200.

It belongs to the class-II pyridine nucleotide-disulfide oxidoreductase family. As to quaternary structure, homodimer. Requires FAD as cofactor.

It localises to the cytoplasm. Its subcellular location is the mitochondrion matrix. It catalyses the reaction [thioredoxin]-dithiol + NADP(+) = [thioredoxin]-disulfide + NADPH + H(+). In terms of biological role, possesses thioredoxin-disulfide reductase activity towards thioredoxins O1, O2 and F3. This Arabidopsis thaliana (Mouse-ear cress) protein is Thioredoxin reductase 2 (NTR2).